The chain runs to 440 residues: MSLDAVWAPQTANIGDGPAKKASDQTSMQTQVLQTASLRDGPAKRAVWVRRDNAEKEEPVKSAVSKDRPRLEVTKAVVVDLGTGFCKCGFAGLPKPTHKISTTVGKPYMETAKTGDNRKETFVGRELFNPDIHLKLVNPLRHGIIVDWDTVQDIWEYLFRQEMKIAPEEHAVLVSDPPLSPHTNREKYAEMLFETFNTPAMHIAYQSRLSMYSYGRTSGLVVEVGHGVSYVVPIYEGYPLPSITGRLDYAGSDLTNYLMNLMNNCGKHFSEDHLSIVEDIKTKCCFVALDPIEEKKIPPSEHEIHYTLPDGKEIRLGQERFLCSEMFFKPSLIKSMQLGLHTQTVSCLNKCDIALKRDLMGNILLCGGSTMLRGFPNRLQKELSSMCPNDTPQVNVLPERDTAVWTGGSILASLQGFQPLWVHRLEYEEHGPFFLYRRCF.

Residues 1-27 (MSLDAVWAPQTANIGDGPAKKASDQTS) are disordered. A required for interaction with TES region spans residues 36–56 (ASLRDGPAKRAVWVRRDNAEK).

It belongs to the actin family. Interacts (via N-terminus) with TES (via LIM domain 2). Heterodimer with TES; the heterodimer interacts with ENAH to form a heterotrimer. Interacts with ACTL9. Interacts with CYLC1; the interaction may be relevant for proper acrosome attachment to the nuclear envelope. In terms of tissue distribution, detected in testis. Detected at the acrosome of round spermatids (at protein level).

It is found in the cytoplasm. Its subcellular location is the cytoskeleton. It localises to the golgi apparatus. The protein localises to the nucleus. In terms of biological role, essential for normal spermatogenesis and male fertility. Required for normal sperm head morphology, acroplaxome formation, acrosome attachment, and acrosome granule stability. May anchor and stabilize acrosomal adherence to the acroplaxome at least in part by facilitating the presence of F-actin in the subacrosomal space. May play an important role in formation and fusion of Golgi-derived vesicles during acrosome biogenesis. The protein is Actin-like protein 7A (Actl7a) of Rattus norvegicus (Rat).